The sequence spans 233 residues: UPF0502 protein YpsIP31758_2048 (233 aa).

Belongs to the UPF0502 family.

The sequence is that of UPF0502 protein YpsIP31758_2048 from Yersinia pseudotuberculosis serotype O:1b (strain IP 31758).